Consider the following 571-residue polypeptide: Kinesin light chain (571 aa).

Residues 54 to 160 (LLTSMKTIRK…KKHLEFMNEM (107 aa)) adopt a coiled-coil conformation. A compositionally biased stretch (basic and acidic residues) spans 167–177 (EAQVNEEKESE). Positions 167 to 210 (EAQVNEEKESEQSSLDLGFPDDDDDGGQPEVLSPTQPSAMAQAA) are disordered. TPR repeat units follow at residues 220-253 (LRTL…LEKT), 262-295 (ATML…REKT), 304-337 (AATL…REKV), 346-379 (AKQL…YQKE), 388-421 (AKTK…AHEK), and 471-504 (TTTL…RKSA). The interval 518 to 571 (GSDFSKGQSPKDRKRSNSRDRNRRDSMDSVSYEKSGDGDEHEKSKLHVGTSHKQ) is disordered. 2 stretches are compositionally biased toward basic and acidic residues: residues 526 to 544 (SPKD…RDSM) and 551 to 562 (KSGDGDEHEKSK).

The protein belongs to the kinesin light chain family. Oligomeric complex composed of two heavy chains and two light chains.

Its subcellular location is the cytoplasm. The protein resides in the cytoskeleton. Functionally, kinesin is a microtubule-associated force-producing protein that may play a role in organelle transport. The light chain may function in coupling of cargo to the heavy chain or in the modulation of its ATPase activity. This Doryteuthis pealeii (Longfin inshore squid) protein is Kinesin light chain.